We begin with the raw amino-acid sequence, 496 residues long: Probable cytosol aminopeptidase (496 aa).

Mn(2+)-binding residues include Lys258 and Asp263. Lys270 is a catalytic residue. The Mn(2+) site is built by Asp281, Asp340, and Glu342. The active site involves Arg344.

Belongs to the peptidase M17 family. Requires Mn(2+) as cofactor.

The protein resides in the cytoplasm. The enzyme catalyses Release of an N-terminal amino acid, Xaa-|-Yaa-, in which Xaa is preferably Leu, but may be other amino acids including Pro although not Arg or Lys, and Yaa may be Pro. Amino acid amides and methyl esters are also readily hydrolyzed, but rates on arylamides are exceedingly low.. The catalysed reaction is Release of an N-terminal amino acid, preferentially leucine, but not glutamic or aspartic acids.. Its function is as follows. Presumably involved in the processing and regular turnover of intracellular proteins. Catalyzes the removal of unsubstituted N-terminal amino acids from various peptides. The sequence is that of Probable cytosol aminopeptidase from Helicobacter pylori (strain P12).